The following is a 425-amino-acid chain: Multifunctional CCA protein (425 aa).

2 residues coordinate ATP: Gly-8 and Arg-11. CTP contacts are provided by Gly-8 and Arg-11. Residues Asp-21 and Asp-23 each coordinate Mg(2+). ATP-binding residues include Arg-91, Arg-141, and Arg-144. The CTP site is built by Arg-91, Arg-141, and Arg-144. An HD domain is found at 230 to 331; that stretch reads TGVHLMMVLD…VRLLERCDAI (102 aa).

The protein belongs to the tRNA nucleotidyltransferase/poly(A) polymerase family. Bacterial CCA-adding enzyme type 1 subfamily. Monomer. Can also form homodimers and oligomers. Requires Mg(2+) as cofactor. It depends on Ni(2+) as a cofactor.

The enzyme catalyses a tRNA precursor + 2 CTP + ATP = a tRNA with a 3' CCA end + 3 diphosphate. It carries out the reaction a tRNA with a 3' CCA end + 2 CTP + ATP = a tRNA with a 3' CCACCA end + 3 diphosphate. Its function is as follows. Catalyzes the addition and repair of the essential 3'-terminal CCA sequence in tRNAs without using a nucleic acid template. Adds these three nucleotides in the order of C, C, and A to the tRNA nucleotide-73, using CTP and ATP as substrates and producing inorganic pyrophosphate. tRNA 3'-terminal CCA addition is required both for tRNA processing and repair. Also involved in tRNA surveillance by mediating tandem CCA addition to generate a CCACCA at the 3' terminus of unstable tRNAs. While stable tRNAs receive only 3'-terminal CCA, unstable tRNAs are marked with CCACCA and rapidly degraded. The chain is Multifunctional CCA protein from Acidovorax sp. (strain JS42).